Consider the following 268-residue polypeptide: Fatty acid elongase sre1 (268 aa).

Helical transmembrane passes span 31 to 51 (VFPFSTSVIYVLVIFALQAIM), 62 to 82 (FSIIHNINLIILSFSMMSGVM), 110 to 130 (IGFWIYIFYLSKYYELVDTVI), 137 to 157 (PIIFLHIFHHMAMVPVTWQWL), 161 to 181 (WLVGSWWCTLVNSFIHVLMYY), 198 to 218 (ITKAQIVQFLTGTAMVSYWFV), and 227 to 247 (APLSPAIVSNTINSFFIILFG).

The protein belongs to the ELO family.

It localises to the membrane. It catalyses the reaction a very-long-chain acyl-CoA + malonyl-CoA + H(+) = a very-long-chain 3-oxoacyl-CoA + CO2 + CoA. Functionally, could be implicated in synthesis of very long chain fatty acids. The sequence is that of Fatty acid elongase sre1 (sre1) from Dictyostelium discoideum (Social amoeba).